Consider the following 106-residue polypeptide: Vacuolar ATPase assembly integral membrane protein VMA21 homolog (106 aa).

The disordered stretch occupies residues 1-26 (MSNKNKKSGGAGNGAAQKQTRQQSHD). The Cytoplasmic portion of the chain corresponds to 1–32 (MSNKNKKSGGAGNGAAQKQTRQQSHDSQDYSS). Residues 33–53 (FKIVLFYCMLIVFLPVVTFFL) traverse the membrane as a helical segment. At 54–69 (LKGFVLDRFFSLSEVK) the chain is on the lumenal side. The helical transmembrane segment at 70–90 (VNIASAVGAVVSLHIALGLYI) threads the bilayer. At 91–106 (YRAYFGATGSKAVKED) the chain is on the cytoplasmic side.

The protein belongs to the VMA21 family.

It localises to the endoplasmic reticulum membrane. The protein resides in the endoplasmic reticulum-Golgi intermediate compartment membrane. It is found in the cytoplasmic vesicle. The protein localises to the COPII-coated vesicle membrane. Functionally, required for the assembly of the V0 complex of the vacuolar ATPase (V-ATPase) in the endoplasmic reticulum. The chain is Vacuolar ATPase assembly integral membrane protein VMA21 homolog from Drosophila ananassae (Fruit fly).